A 186-amino-acid polypeptide reads, in one-letter code: Lipid A acyltransferase PagP (186 aa).

Positions 1–25 are cleaved as a signal peptide; sequence MNVSKYVAIFSFVFIQLISVGKVFA. Catalysis depends on residues histidine 58, aspartate 101, and serine 102.

This sequence belongs to the lipid A palmitoyltransferase family. Homodimer.

It is found in the cell outer membrane. The enzyme catalyses a lipid A + a 1,2-diacyl-sn-glycero-3-phosphocholine = a hepta-acyl lipid A + a 2-acyl-sn-glycero-3-phosphocholine. It carries out the reaction a lipid IVA + a 1,2-diacyl-sn-glycero-3-phosphocholine = a lipid IVB + a 2-acyl-sn-glycero-3-phosphocholine. The catalysed reaction is a lipid IIA + a 1,2-diacyl-sn-glycero-3-phosphocholine = a lipid IIB + a 2-acyl-sn-glycero-3-phosphocholine. Transfers a fatty acid residue from the sn-1 position of a phospholipid to the N-linked hydroxyfatty acid chain on the proximal unit of lipid A or its precursors. The polypeptide is Lipid A acyltransferase PagP (Shigella boydii serotype 4 (strain Sb227)).